The following is a 133-amino-acid chain: Fatty acid-binding protein homolog 1 (133 aa).

Residue methionine 1 is modified to N-acetylmethionine. Residues arginine 107 and arginine 127 to tyrosine 129 each bind hexadecanoate.

Belongs to the calycin superfamily. Fatty-acid binding protein (FABP) family.

Its function is as follows. Has been implicated in the acquisition, storage, and transport of lipids, and may be important to the organism since it is incapable of synthesizing most of its lipids de novo. The sequence is that of Fatty acid-binding protein homolog 1 (FABP1) from Echinococcus granulosus (Hydatid tapeworm).